Here is a 181-residue protein sequence, read N- to C-terminus: Large ribosomal subunit protein uL6 (181 aa).

The protein belongs to the universal ribosomal protein uL6 family. Part of the 50S ribosomal subunit.

Its function is as follows. This protein binds to the 23S rRNA, and is important in its secondary structure. It is located near the subunit interface in the base of the L7/L12 stalk, and near the tRNA binding site of the peptidyltransferase center. In Synechococcus sp. (strain JA-3-3Ab) (Cyanobacteria bacterium Yellowstone A-Prime), this protein is Large ribosomal subunit protein uL6.